Here is a 569-residue protein sequence, read N- to C-terminus: F-box/WD repeat-containing protein 5 (569 aa).

The region spanning 3–49 (EGGMPLLPDSLVYQIFLSLGPADVLAAGLVCRQWQAVSRDEFLWREQ) is the F-box domain. One copy of the WD 1 repeat lies at 90–129 (EHTDQVLHLSFSHSGYQFASCSKDCTVKIWNNDLTISLLH). Residue Ser-151 is modified to Phosphoserine; by PLK4. Residues 308 to 316 (RRVFDSVLD) carry the D-box motif. WD repeat units follow at residues 470–509 (TPNDECFFIFLDVSRDFVASGAEDRHGYIWDRHYNICLAK) and 511–551 (RHED…RVLQ).

It belongs to the FBXW5 family. In terms of assembly, part of the SCF (SKP1-CUL1-F-box) E3 ubiquitin-protein ligase complex SCF(FBXW5) composed of CUL1, SKP1, RBX1 and FBXW5. Component of the DCX(FBXW5) E3 ubiquitin ligase complex, at least composed of (CUL4A or CUL4B), DDB1, FBXW5 and RBX1. Interacts with CDC20, EPS8, TSC1, TSC2 and SASS6. Interacts with TNFAIP8L1; TNFAIP8L1 competes with TSC2 to bind FBXW5 increasing TSC2 stability by preventing its ubiquitination. In terms of processing, phosphorylated at Ser-151 by PLK4 during the G1/S transition, leading to inhibit its ability to ubiquitinate SASS6. Post-translationally, ubiquitinated and degraded by the APC/C complex during mitosis and G1 phase.

The protein resides in the cytoplasm. It functions in the pathway protein modification; protein ubiquitination. In terms of biological role, substrate recognition component of both SCF (SKP1-CUL1-F-box protein) and DCX (DDB1-CUL4-X-box) E3 ubiquitin-protein ligase complexes. Substrate recognition component of the SCF(FBXW5) E3 ubiquitin-protein ligase complex which mediates the ubiquitination and subsequent proteasomal degradation of SASS6 during S phase, leading to prevent centriole reduplication. The SCF(FBXW5) complex also mediates ubiquitination and degradation of actin-regulator EPS8 during G2 phase, leading to the transient degradation of EPS8 and subsequent cell shape changes required to allow mitotic progression. Substrate-specific adapter of the DCX(FBXW5) E3 ubiquitin-protein ligase complex which mediates the polyubiquitination and subsequent degradation of TSC2. May also act as a negative regulator of MAP3K7/TAK1 signaling in the interleukin-1B (IL1B) signaling pathway. The protein is F-box/WD repeat-containing protein 5 (Fbxw5) of Rattus norvegicus (Rat).